The following is a 558-amino-acid chain: MNNNIINLIAAIVLSLSIIFGWQYFVIKPEQKKQQQRMAIYKSENLKKQKALAEHTSNITVQEAGQVQRIKIESESLTGSIALKGLRFDDLILKKYKQDLSQNSPAVRLFSPANTENAYFAEIGLVSNLSSVKLPNSNTVWNSDSEVLSPEKPVNLFWVNEDGIKFLVTITVDKNYLFTIEQTIINNSDKELPVQAYGLINRKYIAVEKAVNILHQGPIGCIDENLKEYSYDDIKDQKSAKFALSKVDWIGIADKYWLSSLIPDKSSSYSANFNYALKQGAERYQVDFISPVQVIKPGKNLSIKSRIFAGAKKVDLLDEYEKSYDIKLFDRAIDFGWFYIITKPVFYAMNFFYGYVGNFGVSILIVTVIIKLLMFTLANKSYRSMKKMKNLQPEIDRIKNLYNNDKARLNQEIMALYKKSKVNPVAGCLPILVQIPVFFSIYKVLYVTIEMRHAPFYGWIKDLSSPDPTTIFNLFGLLPFAPPSFLMIGAWPILMAITMFLHQKMSPELADPIQAQVMKFMPLIFLFMFSSFPVGLLIYWSWNNILSIIQQYYINKFN.

6 helical membrane passes run 5–25 (IINLIAAIVLSLSIIFGWQYF), 332–352 (AIDFGWFYIITKPVFYAMNFF), 355–375 (YVGNFGVSILIVTVIIKLLMF), 429–449 (LPILVQIPVFFSIYKVLYVTI), 474–494 (LFGLLPFAPPSFLMIGAWPIL), and 520–540 (FMPLIFLFMFSSFPVGLLIYW).

This sequence belongs to the OXA1/ALB3/YidC family. Type 1 subfamily. As to quaternary structure, interacts with the Sec translocase complex via SecD. Specifically interacts with transmembrane segments of nascent integral membrane proteins during membrane integration.

It localises to the cell inner membrane. In terms of biological role, required for the insertion and/or proper folding and/or complex formation of integral membrane proteins into the membrane. Involved in integration of membrane proteins that insert both dependently and independently of the Sec translocase complex, as well as at least some lipoproteins. Aids folding of multispanning membrane proteins. This chain is Membrane protein insertase YidC, found in Rickettsia typhi (strain ATCC VR-144 / Wilmington).